The chain runs to 371 residues: Leu/Ile/Val-binding protein homolog 2 (371 aa).

A signal peptide spans 1–23 (MKKSLFCGVCLCALVAMGGTSFA).

This sequence belongs to the leucine-binding protein family.

In terms of biological role, component of an amino-acid transport system. The polypeptide is Leu/Ile/Val-binding protein homolog 2 (Brucella abortus (strain 2308)).